The following is a 713-amino-acid chain: Serologically defined colon cancer antigen 8 (713 aa).

Residues S4 and S28 each carry the phosphoserine modification. Residues 84 to 103 (QADKESEVSPSRRRKMSPLR) are disordered. A coiled-coil region spans residues 129-175 (IHHLEAEVKFCKEELSGMKNKIQVVVLENEGLQQQLKSQRQEETLRE). The tract at residues 194 to 215 (EDSGVGETSKRPFSHDNADFGK) is disordered. Over residues 201–212 (TSKRPFSHDNAD) the composition is skewed to basic and acidic residues. A sufficient for homodimerization region spans residues 216–713 (AASAGEQLEL…QLPSMPQSDC (498 aa)). 2 coiled-coil regions span residues 223–273 (LELE…LLAA) and 348–707 (EEAN…QLPS). Residues 533–713 (HQLHLTRQEK…QLPSMPQSDC (181 aa)) are mediates interaction with OFD1.

As to quaternary structure, homodimer. Interacts with OFD1; the interaction is direct. Interacts with FAM161A. Interacts with RABEP2, ERC1 and CEP131. Expressed in thymus, prostate, testis, ovary, small intestine, colon, mucosa, colon and renal cancer tumors.

The protein localises to the cytoplasm. It localises to the cytoskeleton. The protein resides in the microtubule organizing center. It is found in the centrosome. Its subcellular location is the centriole. The protein localises to the cilium basal body. It localises to the cell junction. Plays a role in the establishment of cell polarity and epithelial lumen formation. Also plays an essential role in ciliogenesis and subsequent Hedgehog signaling pathway that requires the presence of intact primary cilia for pathway activation. Mechanistically, interacts with and mediates RABEP2 centrosomal localization which is critical for ciliogenesis. The polypeptide is Serologically defined colon cancer antigen 8 (SDCCAG8) (Homo sapiens (Human)).